A 331-amino-acid polypeptide reads, in one-letter code: GTPase Obg (331 aa).

The region spanning 1–159 is the Obg domain; that stretch reads MQFIDQARIA…RELQLELKLL (159 aa). An OBG-type G domain is found at 160–328; that stretch reads AEVGLVGLPN…LLQQVWQELG (169 aa). GTP-binding positions include 166–173, 191–195, 213–216, 280–283, and 309–311; these read GLPNAGKS, FTTLV, DIPG, SKSE, and SAV. Residues S173 and T193 each contribute to the Mg(2+) site.

The protein belongs to the TRAFAC class OBG-HflX-like GTPase superfamily. OBG GTPase family. As to quaternary structure, monomer. Mg(2+) serves as cofactor.

It localises to the cytoplasm. Functionally, an essential GTPase which binds GTP, GDP and possibly (p)ppGpp with moderate affinity, with high nucleotide exchange rates and a fairly low GTP hydrolysis rate. Plays a role in control of the cell cycle, stress response, ribosome biogenesis and in those bacteria that undergo differentiation, in morphogenesis control. The polypeptide is GTPase Obg (Synechococcus sp. (strain RCC307)).